The sequence spans 480 residues: Probable WRKY transcription factor 61 (480 aa).

Residues 30–108 (NQLMAKHNEP…RNYDDNEKSS (79 aa)) form a disordered region. 2 stretches are compositionally biased toward basic and acidic residues: residues 57-66 (REKVNEREEL) and 84-106 (NKEEKNKDVEEAEGDRNYDDNEK). Positions 185–251 (CETPTMNDGC…YEGTHNHPLP (67 aa)) form a DNA-binding region, WRKY.

The protein resides in the nucleus. Its function is as follows. Transcription factor. Interacts specifically with the W box (5'-(T)TGAC[CT]-3'), a frequently occurring elicitor-responsive cis-acting element. This is Probable WRKY transcription factor 61 (WRKY61) from Arabidopsis thaliana (Mouse-ear cress).